We begin with the raw amino-acid sequence, 186 residues long: NADH-dependent FMN reductase SfnF (186 aa).

Belongs to the SsuE family.

It catalyses the reaction FMNH2 + NAD(+) = FMN + NADH + 2 H(+). Functionally, involved in the dimethyl sulfide degradation pathway. Catalyzes the NADH-dependent reduction of FMN. In Pseudomonas putida (Arthrobacter siderocapsulatus), this protein is NADH-dependent FMN reductase SfnF.